The following is a 197-amino-acid chain: Protein Hikeshi (197 aa).

The required for F-X-F-G repeats-nucleoporins recognition and nuclear import stretch occupies residues 18 to 55 (VAEDKFVFDLPDYESINHVVVFMLGTIPFPEGMGGSVY). The flexible linker region involved in nuclear import of HSP70 proteins stretch occupies residues 124-134 (QTPVGNAAVSS).

The protein belongs to the OPI10 family. In terms of assembly, forms an asymmetric homodimer; required for binding and nuclear import of HSP70 proteins. Interacts with ATP-bound HSP70 proteins. Interacts with NUP62 and NUP153 (via F-X-F-G repeats). Interacts with HSPA8.

It is found in the cytoplasm. It localises to the cytosol. The protein resides in the nucleus. Acts as a specific nuclear import carrier for HSP70 proteins following heat-shock stress: acts by mediating the nucleoporin-dependent translocation of ATP-bound HSP70 proteins into the nucleus. HSP70 proteins import is required to protect cells from heat shock damages. Does not translocate ADP-bound HSP70 proteins into the nucleus. This chain is Protein Hikeshi, found in Homo sapiens (Human).